The sequence spans 952 residues: Ubiquitin carboxyl-terminal hydrolase 15 (952 aa).

Ala-2 bears the N-acetylalanine mark. Residues 2-223 (AEGGAADLDI…KNEDGTWPRG (222 aa)) are mediates interaction with SART3. In terms of domain architecture, DUSP spans 7–118 (ADLDIQRSDI…GQEPIARKVV (112 aa)). Thr-226 is subject to Phosphothreonine. The USP domain occupies 260–904 (CGLSNLGNTC…AAYVLFYQRQ (645 aa)). The Nucleophile role is filled by Cys-269. At Thr-573 the chain carries Phosphothreonine. Positions 598 to 666 (TEGSLHCCKD…GDNDSENGLC (69 aa)) are disordered. Residues 627–644 (METDEPDDESSQDQELPS) show a composition bias toward acidic residues. His-862 acts as the Proton acceptor in catalysis. A disordered region spans residues 923 to 952 (SAATGIPLESDEDSNDNDNDIENENCMHTN). The span at 931 to 945 (ESDEDSNDNDNDIEN) shows a compositional bias: acidic residues. 2 positions are modified to phosphoserine: Ser-932 and Ser-936.

It belongs to the peptidase C19 family. In terms of assembly, a homodimer structure has been reported; however it is unclear whether the protein form a homodimer in vivo. Identified in a complex with the COP9 signalosome complex (CSN). Interacts with SMAD1, SMAD2 and SMAD3; the interaction is direct. Forms a complex with SMURF2 and SMAD7. Interacts with TGFBR1. Interacts with SART3; the interaction is direct. May interact with RNF20 and RNF40. May interact with PRKN. Interacts with INCA1. In terms of processing, phosphorylated. Phosphorylation protects against ubiquitination and subsequent degradation by the proteasome. Ubiquitinated, leading to degradation by the proteasome.

Its subcellular location is the cytoplasm. The protein localises to the nucleus. The protein resides in the mitochondrion. It carries out the reaction Thiol-dependent hydrolysis of ester, thioester, amide, peptide and isopeptide bonds formed by the C-terminal Gly of ubiquitin (a 76-residue protein attached to proteins as an intracellular targeting signal).. In terms of biological role, hydrolase that removes conjugated ubiquitin from target proteins and regulates various pathways such as the TGF-beta receptor signaling, NF-kappa-B and RNF41/NRDP1-PRKN pathways. Acts as a key regulator of TGF-beta receptor signaling pathway, but the precise mechanism is still unclear: according to a report, acts by promoting deubiquitination of monoubiquitinated R-SMADs (SMAD1, SMAD2 and/or SMAD3), thereby alleviating inhibition of R-SMADs and promoting activation of TGF-beta target genes. According to another reports, regulates the TGF-beta receptor signaling pathway by mediating deubiquitination and stabilization of TGFBR1, leading to an enhanced TGF-beta signal. Able to mediate deubiquitination of monoubiquitinated substrates, 'Lys-27'-, 'Lys-48'- and 'Lys-63'-linked polyubiquitin chains. May also regulate gene expression and/or DNA repair through the deubiquitination of histone H2B. Acts as an inhibitor of mitophagy by counteracting the action of parkin (PRKN): hydrolyzes cleavage of 'Lys-48'- and 'Lys-63'-linked polyubiquitin chains attached by parkin on target proteins such as MFN2, thereby reducing parkin's ability to drive mitophagy. Acts as an associated component of COP9 signalosome complex (CSN) and regulates different pathways via this association: regulates NF-kappa-B by mediating deubiquitination of NFKBIA and deubiquitinates substrates bound to VCP. Involved in endosome organization by mediating deubiquitination of SQSTM1: ubiquitinated SQSTM1 forms a molecular bridge that restrains cognate vesicles in the perinuclear region and its deubiquitination releases target vesicles for fast transport into the cell periphery. Acts as a negative regulator of antifungal immunity by mediating 'Lys-27'-linked deubiquitination of CARD9, thereby inactivating CARD9. This is Ubiquitin carboxyl-terminal hydrolase 15 (USP15) from Bos taurus (Bovine).